We begin with the raw amino-acid sequence, 314 residues long: MEFDLGEYFRAAFEDKLLVKMPDREDDFMTPATRLLEKRREMVEVEQALSTQKEEFQMKSESLQQRRSELELKEEKLKDSLFKFDKFLKENDSKRKRALHKAAEERQMAAQKERDALRLQAENTQLMQRKHILLQRQEKNSIYQRYLQRVLERTDEFQEVQEMIDRFNTLMATQNKLLKRELKNQEHAEMEKARLLHYQEETRSQILELNNQIAQLQGELERARAVAFQWESRWAQIQNTAAENTLRLGRVRMATLNLFQTISKQMRLKTDISVEDTEAQLEKIQICFEDLAAIHKDLKKAEMVPQTPAVPTTN.

2 coiled-coil regions span residues 34 to 139 (RLLE…RQEK) and 175 to 233 (NKLL…WESR).

This sequence belongs to the CFAP73 family.

The protein is Coiled-coil domain-containing protein 42 like-2 of Xenopus laevis (African clawed frog).